Consider the following 60-residue polypeptide: UPF0434 protein YPA_0693 (60 aa).

Belongs to the UPF0434 family.

This chain is UPF0434 protein YPA_0693, found in Yersinia pestis bv. Antiqua (strain Antiqua).